Reading from the N-terminus, the 207-residue chain is Ion-translocating oxidoreductase complex subunit B (207 aa).

The hydrophobic stretch occupies residues 1–29 (MLDLSIIAYLLIAICLIALIFGALLGYFS). One can recognise a 4Fe-4S domain in the interval 35 to 93 (EADPIVDQIDAILPQSQCGQCGYPGCKPYAEAIANGDQITKCVPGGQPLVVKIAELMGV). Residues Cys-52, Cys-55, Cys-60, Cys-76, Cys-116, Cys-119, Cys-122, Cys-126, Cys-146, Cys-149, Cys-152, and Cys-156 each contribute to the [4Fe-4S] cluster site. 4Fe-4S ferredoxin-type domains are found at residues 107–136 (KVALIHEDMCIGCTKCIQACPVDAIIGTNK) and 137–166 (AMHTVVADLCTGCELCVAPCPTNCIEMIKV).

The protein belongs to the 4Fe4S bacterial-type ferredoxin family. RnfB subfamily. In terms of assembly, the complex is composed of six subunits: RnfA, RnfB, RnfC, RnfD, RnfE and RnfG. [4Fe-4S] cluster is required as a cofactor.

The protein localises to the cell inner membrane. Part of a membrane-bound complex that couples electron transfer with translocation of ions across the membrane. This chain is Ion-translocating oxidoreductase complex subunit B, found in Haemophilus ducreyi (strain 35000HP / ATCC 700724).